Here is a 50-residue protein sequence, read N- to C-terminus: KFCEKPSGTWSGVCGNSGACKDQCIRLEGAKHGSCNYKLPAHRCICYYEC.

4 disulfide bridges follow: Cys-3-Cys-50, Cys-14-Cys-35, Cys-20-Cys-44, and Cys-24-Cys-46.

In terms of processing, contains 4 disulfide bonds.

It is found in the secreted. Its function is as follows. Antimicrobial peptide active against fungi, Gram-positive and Gram-negative bacteria. Inhibits growth of hyphae in the fungi A.niger (IC(50)=3.5 ug/ml), B.sorokiniana (IC(50)=1.8 ug/ml), F.oxysporum (IC(50)=5.3 ug/ml), F.graminearum (IC(50)=6.9 ug/ml), F.culmorum (IC(50)=6.9 ug/ml) and B.cinerea (IC(50)=13.7 ug/ml). Has no effect on spore germination. Destroys spores in germinated conidia by disruption of cell walls and membranes in A.niger and B.sorokiniana. Causes vacuolization of germinated macro- and microconidia in F.oxysporum, F.graminearum and F.culmorum. Strongly inhibits growth of P.infestans on potato tubers above concentrations of 3.4 ug/ml. Inhibits growth of Gram-positive bacteria C.michiganensis and B.subtilis and of Gram-negative bacteria P.syringae, E.carotovora and E.coli. The chain is Defensin D2 from Nigella sativa (Black cumin).